A 256-amino-acid polypeptide reads, in one-letter code: Trans-aconitate 2-methyltransferase (256 aa).

The protein belongs to the methyltransferase superfamily. Tam family.

It localises to the cytoplasm. The enzyme catalyses trans-aconitate + S-adenosyl-L-methionine = (E)-3-(methoxycarbonyl)pent-2-enedioate + S-adenosyl-L-homocysteine. Functionally, catalyzes the S-adenosylmethionine monomethyl esterification of trans-aconitate. The polypeptide is Trans-aconitate 2-methyltransferase (Rhodopseudomonas palustris (strain BisB5)).